The primary structure comprises 88 residues: Small ribosomal subunit protein uS17 (88 aa).

It belongs to the universal ribosomal protein uS17 family. Part of the 30S ribosomal subunit.

Functionally, one of the primary rRNA binding proteins, it binds specifically to the 5'-end of 16S ribosomal RNA. The sequence is that of Small ribosomal subunit protein uS17 from Synechococcus sp. (strain CC9311).